A 441-amino-acid chain; its full sequence is Ribosomal protein uS12 methylthiotransferase RimO (441 aa).

The MTTase N-terminal domain maps to 7–117 (ASIAMISLGC…VVLEVHRAAP (111 aa)). 6 residues coordinate [4Fe-4S] cluster: cysteine 16, cysteine 52, cysteine 81, cysteine 150, cysteine 154, and cysteine 157. The region spanning 136–373 (LTPRHYAYLK…MAHQQAISAA (238 aa)) is the Radical SAM core domain. In terms of domain architecture, TRAM spans 376-441 (QTRVGREIDV…DEYDLHGDAV (66 aa)).

This sequence belongs to the methylthiotransferase family. RimO subfamily. [4Fe-4S] cluster serves as cofactor.

Its subcellular location is the cytoplasm. It catalyses the reaction L-aspartate(89)-[ribosomal protein uS12]-hydrogen + (sulfur carrier)-SH + AH2 + 2 S-adenosyl-L-methionine = 3-methylsulfanyl-L-aspartate(89)-[ribosomal protein uS12]-hydrogen + (sulfur carrier)-H + 5'-deoxyadenosine + L-methionine + A + S-adenosyl-L-homocysteine + 2 H(+). Catalyzes the methylthiolation of an aspartic acid residue of ribosomal protein uS12. This Bordetella petrii (strain ATCC BAA-461 / DSM 12804 / CCUG 43448) protein is Ribosomal protein uS12 methylthiotransferase RimO.